We begin with the raw amino-acid sequence, 261 residues long: 5'-nucleotidase SurE (261 aa).

A divalent metal cation-binding residues include Asp-12, Asp-13, Ser-43, and Asn-100.

It belongs to the SurE nucleotidase family. Requires a divalent metal cation as cofactor.

Its subcellular location is the cytoplasm. The catalysed reaction is a ribonucleoside 5'-phosphate + H2O = a ribonucleoside + phosphate. Functionally, nucleotidase that shows phosphatase activity on nucleoside 5'-monophosphates. In Protochlamydia amoebophila (strain UWE25), this protein is 5'-nucleotidase SurE.